Consider the following 64-residue polypeptide: Cecropin-A (64 aa).

Positions 1–22 (MNFSRIFFFVFACLTALAMVNA) are cleaved as a signal peptide. Positions 23–26 (APEP) are cleaved as a propeptide — removed by a dipeptidylpeptidase. Lys-63 carries the lysine amide modification.

It belongs to the cecropin family. Post-translationally, a protein with the same sequence as cecropin A, but lacking the carboxyl blocking group, has been isolated and called cecropin C.

Its subcellular location is the secreted. Functionally, cecropins have lytic and antibacterial activity against several Gram-positive and Gram-negative bacteria. The chain is Cecropin-A from Hyalophora cecropia (Cecropia moth).